Consider the following 69-residue polypeptide: Neuropeptide-like protein 30 (69 aa).

A signal peptide spans 1 to 22; sequence MISTSSILILVVLLACFMAASA. 4 positions are modified to tyrosine amide: Y29, Y39, Y46, and Y53. A tryptophan amide mark is found at W58 and W67.

It belongs to the YARP (YGGW-amide related peptide) family. As to expression, expressed in hypoderm.

It is found in the secreted. Functionally, may have antimicrobial activity. May play a role in response to fungal infection. The sequence is that of Neuropeptide-like protein 30 (nlp-30) from Caenorhabditis elegans.